The sequence spans 154 residues: Deoxyuridine 5'-triphosphate nucleotidohydrolase (154 aa).

Substrate is bound by residues 64–66 (RSG), asparagine 77, 81–83 (TID), and lysine 91.

The protein belongs to the dUTPase family. As to quaternary structure, homotrimer. It depends on Mg(2+) as a cofactor.

It carries out the reaction dUTP + H2O = dUMP + diphosphate + H(+). Its pathway is pyrimidine metabolism; dUMP biosynthesis; dUMP from dCTP (dUTP route): step 2/2. This enzyme is involved in nucleotide metabolism: it produces dUMP, the immediate precursor of thymidine nucleotides and it decreases the intracellular concentration of dUTP so that uracil cannot be incorporated into DNA. The chain is Deoxyuridine 5'-triphosphate nucleotidohydrolase from Mycobacterium sp. (strain JLS).